The sequence spans 1755 residues: Transposon Ty1-ER1 Gag-Pol polyprotein (1755 aa).

Polar residues-rich tracts occupy residues 1-23 (MESQ…SVTS), 48-60 (TKAN…TPAS), and 127-152 (QSQF…GNTF). Disordered stretches follow at residues 1-93 (MESQ…MMTQ), 126-174 (PQSQ…PPPM), and 352-421 (GSRN…SKST). Over residues 153-165 (TDSSSADSDMTST) the composition is skewed to low complexity. The segment at 299 to 401 (NNGIHINNKV…NSKSKTARAH (103 aa)) is RNA-binding. Over residues 402–418 (NVSTSNNSPSTDNDSIS) the composition is skewed to low complexity. S416 carries the post-translational modification Phosphoserine. D461 acts as the For protease activity; shared with dimeric partner in catalysis. Positions 583–640 (NVHTSESTRKYPYPFIHRMLAHANAQTIRYSLKNNTITYFNESDVDWSSAIDYQCPDC) are integrase-type zinc finger-like. The Integrase catalytic domain occupies 660-835 (NSYEPFQYLH…AGLDISTLLP (176 aa)). Residues D671 and D736 each coordinate Mg(2+). Disordered regions lie at residues 956–1087 (SKAV…ETEK), 1092–1111 (RSPS…NIVP), and 1130–1171 (DLPL…DSNA). Low complexity predominate over residues 960–969 (SPTDSTPPST). Over residues 1005-1015 (STPQISNIEST) the composition is skewed to polar residues. The span at 1038-1053 (ESSHASKSKDFRHSDS) shows a compositional bias: basic and acidic residues. 2 stretches are compositionally biased toward polar residues: residues 1054 to 1082 (YSEN…QISD) and 1101 to 1111 (PENNSSHNIVP). Positions 1178-1212 (KKRSLEDNETEIKVSRDTWNTKNMRSLEPPRSKKR) match the Bipartite nuclear localization signal motif. The 139-residue stretch at 1338–1476 (NNYYITQLDI…DILGLEIKYQ (139 aa)) folds into the Reverse transcriptase Ty1/copia-type domain. 6 residues coordinate Mg(2+): D1346, D1427, D1428, D1610, E1652, and D1685. An RNase H Ty1/copia-type domain is found at 1610 to 1752 (DASYGNQPYY…IKTFKLLTNK (143 aa)).

As to quaternary structure, the capsid protein forms a homotrimer, from which the VLPs are assembled. The protease is a homodimer, whose active site consists of two apposed aspartic acid residues. In terms of processing, initially, virus-like particles (VLPs) are composed of the structural unprocessed proteins Gag and Gag-Pol, and also contain the host initiator methionine tRNA (tRNA(i)-Met) which serves as a primer for minus-strand DNA synthesis, and a dimer of genomic Ty RNA. Processing of the polyproteins occurs within the particle and proceeds by an ordered pathway, called maturation. First, the protease (PR) is released by autocatalytic cleavage of the Gag-Pol polyprotein yielding capsid protein p45 and a Pol-p154 precursor protein. This cleavage is a prerequisite for subsequent processing of Pol-p154 at the remaining sites to release the mature structural and catalytic proteins. Maturation takes place prior to the RT reaction and is required to produce transposition-competent VLPs.

The protein resides in the cytoplasm. The protein localises to the nucleus. The catalysed reaction is DNA(n) + a 2'-deoxyribonucleoside 5'-triphosphate = DNA(n+1) + diphosphate. It carries out the reaction Endonucleolytic cleavage to 5'-phosphomonoester.. Its function is as follows. Capsid protein (CA) is the structural component of the virus-like particle (VLP), forming the shell that encapsulates the retrotransposons dimeric RNA genome. The particles are assembled from trimer-clustered units and there are holes in the capsid shells that allow for the diffusion of macromolecules. CA also has nucleocapsid-like chaperone activity, promoting primer tRNA(i)-Met annealing to the multipartite primer-binding site (PBS), dimerization of Ty1 RNA and initiation of reverse transcription. The aspartyl protease (PR) mediates the proteolytic cleavages of the Gag and Gag-Pol polyproteins after assembly of the VLP. In terms of biological role, reverse transcriptase/ribonuclease H (RT) is a multifunctional enzyme that catalyzes the conversion of the retro-elements RNA genome into dsDNA within the VLP. The enzyme displays a DNA polymerase activity that can copy either DNA or RNA templates, and a ribonuclease H (RNase H) activity that cleaves the RNA strand of RNA-DNA heteroduplexes during plus-strand synthesis and hydrolyzes RNA primers. The conversion leads to a linear dsDNA copy of the retrotransposon that includes long terminal repeats (LTRs) at both ends. Functionally, integrase (IN) targets the VLP to the nucleus, where a subparticle preintegration complex (PIC) containing at least integrase and the newly synthesized dsDNA copy of the retrotransposon must transit the nuclear membrane. Once in the nucleus, integrase performs the integration of the dsDNA into the host genome. The protein is Transposon Ty1-ER1 Gag-Pol polyprotein (TY1B-ER1) of Saccharomyces cerevisiae (strain ATCC 204508 / S288c) (Baker's yeast).